Reading from the N-terminus, the 321-residue chain is ATP phosphoribosyltransferase regulatory subunit (321 aa).

This sequence belongs to the class-II aminoacyl-tRNA synthetase family. HisZ subfamily. As to quaternary structure, heteromultimer composed of HisG and HisZ subunits.

The protein localises to the cytoplasm. The protein operates within amino-acid biosynthesis; L-histidine biosynthesis; L-histidine from 5-phospho-alpha-D-ribose 1-diphosphate: step 1/9. In terms of biological role, required for the first step of histidine biosynthesis. May allow the feedback regulation of ATP phosphoribosyltransferase activity by histidine. This is ATP phosphoribosyltransferase regulatory subunit from Thiobacillus denitrificans (strain ATCC 25259 / T1).